We begin with the raw amino-acid sequence, 57 residues long: Large ribosomal subunit protein bL32 (57 aa).

A compositionally biased stretch (basic residues) spans 1–19; that stretch reads MAVPKRRMSRANTRSRRAQ. Residues 1 to 20 are disordered; it reads MAVPKRRMSRANTRSRRAQW.

This sequence belongs to the bacterial ribosomal protein bL32 family.

This is Large ribosomal subunit protein bL32 from Mycolicibacterium smegmatis (strain ATCC 700084 / mc(2)155) (Mycobacterium smegmatis).